The sequence spans 396 residues: NADH-quinone oxidoreductase subunit D (396 aa).

This sequence belongs to the complex I 49 kDa subunit family. NDH-1 is composed of 14 different subunits. Subunits NuoB, C, D, E, F, and G constitute the peripheral sector of the complex.

The protein localises to the cell inner membrane. It carries out the reaction a quinone + NADH + 5 H(+)(in) = a quinol + NAD(+) + 4 H(+)(out). Functionally, NDH-1 shuttles electrons from NADH, via FMN and iron-sulfur (Fe-S) centers, to quinones in the respiratory chain. The immediate electron acceptor for the enzyme in this species is believed to be ubiquinone. Couples the redox reaction to proton translocation (for every two electrons transferred, four hydrogen ions are translocated across the cytoplasmic membrane), and thus conserves the redox energy in a proton gradient. This is NADH-quinone oxidoreductase subunit D from Bartonella bacilliformis (strain ATCC 35685 / KC583 / Herrer 020/F12,63).